Here is a 223-residue protein sequence, read N- to C-terminus: Deoxyribose-phosphate aldolase (223 aa).

Aspartate 89 functions as the Proton donor/acceptor in the catalytic mechanism. The Schiff-base intermediate with acetaldehyde role is filled by lysine 152. The active-site Proton donor/acceptor is the lysine 181.

It belongs to the DeoC/FbaB aldolase family. DeoC type 1 subfamily.

It is found in the cytoplasm. It carries out the reaction 2-deoxy-D-ribose 5-phosphate = D-glyceraldehyde 3-phosphate + acetaldehyde. The protein operates within carbohydrate degradation; 2-deoxy-D-ribose 1-phosphate degradation; D-glyceraldehyde 3-phosphate and acetaldehyde from 2-deoxy-alpha-D-ribose 1-phosphate: step 2/2. Functionally, catalyzes a reversible aldol reaction between acetaldehyde and D-glyceraldehyde 3-phosphate to generate 2-deoxy-D-ribose 5-phosphate. This Bacillus cereus (strain ATCC 14579 / DSM 31 / CCUG 7414 / JCM 2152 / NBRC 15305 / NCIMB 9373 / NCTC 2599 / NRRL B-3711) protein is Deoxyribose-phosphate aldolase.